A 250-amino-acid chain; its full sequence is 5-oxoprolinase subunit A (250 aa).

It belongs to the LamB/PxpA family. Forms a complex composed of PxpA, PxpB and PxpC.

It carries out the reaction 5-oxo-L-proline + ATP + 2 H2O = L-glutamate + ADP + phosphate + H(+). Its function is as follows. Catalyzes the cleavage of 5-oxoproline to form L-glutamate coupled to the hydrolysis of ATP to ADP and inorganic phosphate. The sequence is that of 5-oxoprolinase subunit A from Paraburkholderia xenovorans (strain LB400).